Reading from the N-terminus, the 223-residue chain is Phosphoribosylformylglycinamidine synthase subunit PurQ (223 aa).

The region spanning 3 to 223 is the Glutamine amidotransferase type-1 domain; that stretch reads FAVLVFPGSN…MVKSWREQHV (221 aa). The active-site Nucleophile is the Cys85. Catalysis depends on residues His193 and Glu195.

Part of the FGAM synthase complex composed of 1 PurL, 1 PurQ and 2 PurS subunits.

The protein resides in the cytoplasm. It carries out the reaction N(2)-formyl-N(1)-(5-phospho-beta-D-ribosyl)glycinamide + L-glutamine + ATP + H2O = 2-formamido-N(1)-(5-O-phospho-beta-D-ribosyl)acetamidine + L-glutamate + ADP + phosphate + H(+). It catalyses the reaction L-glutamine + H2O = L-glutamate + NH4(+). The protein operates within purine metabolism; IMP biosynthesis via de novo pathway; 5-amino-1-(5-phospho-D-ribosyl)imidazole from N(2)-formyl-N(1)-(5-phospho-D-ribosyl)glycinamide: step 1/2. In terms of biological role, part of the phosphoribosylformylglycinamidine synthase complex involved in the purines biosynthetic pathway. Catalyzes the ATP-dependent conversion of formylglycinamide ribonucleotide (FGAR) and glutamine to yield formylglycinamidine ribonucleotide (FGAM) and glutamate. The FGAM synthase complex is composed of three subunits. PurQ produces an ammonia molecule by converting glutamine to glutamate. PurL transfers the ammonia molecule to FGAR to form FGAM in an ATP-dependent manner. PurS interacts with PurQ and PurL and is thought to assist in the transfer of the ammonia molecule from PurQ to PurL. The polypeptide is Phosphoribosylformylglycinamidine synthase subunit PurQ (Staphylococcus aureus (strain MRSA252)).